A 315-amino-acid chain; its full sequence is tRNA-specific adenosine deaminase subunit tad3 (315 aa).

The CMP/dCMP-type deaminase domain occupies 158 to 299; it reads KRIESILEDL…AELNHRYLAY (142 aa). Zn(2+) contacts are provided by H211, C253, and C256.

Belongs to the cytidine and deoxycytidylate deaminase family. ADAT3 subfamily. In terms of assembly, heterodimer with Tad2.

The protein localises to the cytoplasm. It is found in the nucleus. Functionally, structural subunit of tRNA-specific adenosine deaminase, which deaminates adenosine-34 (the first, also called wobble position of the anticodon) to inosine in many tRNAs. Inosine-34 allows the decoding of 3 different nucleotides at the third position of mRNA codons, as inosine is able to pair with U, C, and A. The wobble inosine tRNA modification is essential for cell cycle progression in the G1/S and G2/M transitions in fission yeast. The sequence is that of tRNA-specific adenosine deaminase subunit tad3 (tad3) from Schizosaccharomyces pombe (strain 972 / ATCC 24843) (Fission yeast).